The sequence spans 512 residues: DEAD-box ATP-dependent RNA helicase 5 (512 aa).

Disordered regions lie at residues 1 to 33 and 45 to 76; these read MGRSMLPEQQEDVSRKSKKEKKSKKDKKRKLEA and ATSTDEATKSSKKKRAKGDLGQGEEAENGGGK. Residues 14–45 are a coiled coil; that stretch reads SRKSKKEKKSKKDKKRKLEAEAEVVVVEAAAA. The span at 16-30 shows a compositional bias: basic residues; that stretch reads KSKKEKKSKKDKKRK. Positions 94 to 120 match the Q motif motif; the sequence is SSFAATALPPQVLDCCKGFERPSPIQA. The 178-residue stretch at 123 to 300 folds into the Helicase ATP-binding domain; the sequence is WPYLLDGRDF…QEFMDPNPIK (178 aa). Position 136 to 143 (136 to 143) interacts with ATP; the sequence is AATGSGKT. The DEAD box motif lies at 248-251; it reads DEAD. In terms of domain architecture, Helicase C-terminal spans 333–476; the sequence is LLDKYHKAQR…VVPPALTKFG (144 aa).

It belongs to the DEAD box helicase family. DDX5/DBP2 subfamily.

It is found in the nucleus. It localises to the nucleolus. It catalyses the reaction ATP + H2O = ADP + phosphate + H(+). Functionally, ATP-dependent RNA helicase required for 60S ribosomal subunit synthesis. Involved in efficient pre-rRNA processing, predominantly at site A3, which is necessary for the normal formation of 25S and 5.8S rRNAs. The sequence is that of DEAD-box ATP-dependent RNA helicase 5 from Oryza sativa subsp. japonica (Rice).